The chain runs to 370 residues: Aminomethyltransferase (370 aa).

It belongs to the GcvT family. The glycine cleavage system is composed of four proteins: P, T, L and H.

It catalyses the reaction N(6)-[(R)-S(8)-aminomethyldihydrolipoyl]-L-lysyl-[protein] + (6S)-5,6,7,8-tetrahydrofolate = N(6)-[(R)-dihydrolipoyl]-L-lysyl-[protein] + (6R)-5,10-methylene-5,6,7,8-tetrahydrofolate + NH4(+). The glycine cleavage system catalyzes the degradation of glycine. In Clostridium botulinum (strain 657 / Type Ba4), this protein is Aminomethyltransferase.